The following is a 155-amino-acid chain: 6,7-dimethyl-8-ribityllumazine synthase (155 aa).

5-amino-6-(D-ribitylamino)uracil is bound by residues Trp-22, 56–58 (SYE), and 80–82 (AVI). Residue 85-86 (DT) participates in (2S)-2-hydroxy-3-oxobutyl phosphate binding. The Proton donor role is filled by His-88. Residue Phe-113 coordinates 5-amino-6-(D-ribitylamino)uracil. Arg-127 contacts (2S)-2-hydroxy-3-oxobutyl phosphate.

Belongs to the DMRL synthase family.

The enzyme catalyses (2S)-2-hydroxy-3-oxobutyl phosphate + 5-amino-6-(D-ribitylamino)uracil = 6,7-dimethyl-8-(1-D-ribityl)lumazine + phosphate + 2 H2O + H(+). It functions in the pathway cofactor biosynthesis; riboflavin biosynthesis; riboflavin from 2-hydroxy-3-oxobutyl phosphate and 5-amino-6-(D-ribitylamino)uracil: step 1/2. Catalyzes the formation of 6,7-dimethyl-8-ribityllumazine by condensation of 5-amino-6-(D-ribitylamino)uracil with 3,4-dihydroxy-2-butanone 4-phosphate. This is the penultimate step in the biosynthesis of riboflavin. This is 6,7-dimethyl-8-ribityllumazine synthase from Deinococcus radiodurans (strain ATCC 13939 / DSM 20539 / JCM 16871 / CCUG 27074 / LMG 4051 / NBRC 15346 / NCIMB 9279 / VKM B-1422 / R1).